Consider the following 127-residue polypeptide: Small ribosomal subunit protein uS11 (127 aa).

The protein belongs to the universal ribosomal protein uS11 family. In terms of assembly, part of the 30S ribosomal subunit. Interacts with proteins S7 and S18. Binds to IF-3.

Its function is as follows. Located on the platform of the 30S subunit, it bridges several disparate RNA helices of the 16S rRNA. Forms part of the Shine-Dalgarno cleft in the 70S ribosome. The sequence is that of Small ribosomal subunit protein uS11 from Streptococcus agalactiae serotype Ia (strain ATCC 27591 / A909 / CDC SS700).